Here is a 173-residue protein sequence, read N- to C-terminus: VVLSKECAKPLATPKVTLNKRGFATTIATKNREMMVWQPFNNKMFETFSFLPPLTDEQISKQVDYILTNSWTPCLEFAASDQAYAGNENCIRMGPVASTYQDNRYWTMWKLPMFGCTDGSQVLSEIQACTKAFPDAYIRLVCFDANRQVQISGFLVHRPPSATDYRLPADRQV.

Residues 1–33 (VVLSKECAKPLATPKVTLNKRGFATTIATKNRE) constitute a chloroplast transit peptide.

The protein belongs to the RuBisCO small chain family. Heterohexadecamer of 8 large and 8 small subunits.

The protein localises to the plastid. The protein resides in the chloroplast. RuBisCO catalyzes two reactions: the carboxylation of D-ribulose 1,5-bisphosphate, the primary event in carbon dioxide fixation, as well as the oxidative fragmentation of the pentose substrate. Both reactions occur simultaneously and in competition at the same active site. Although the small subunit is not catalytic it is essential for maximal activity. This Acetabularia acetabulum (Mermaid's wine glass) protein is Ribulose bisphosphate carboxylase small subunit, chloroplastic 2.